Reading from the N-terminus, the 379-residue chain is AT-rich binding protein (379 aa).

A C2H2-type 1 zinc finger spans residues 29-52 (IVCHTCQEELQTQDQFWKHIQDEH). The segment covering 114 to 124 (EQREVELHEAH) has biased composition (basic and acidic residues). Disordered regions lie at residues 114–148 (EQRE…DAAK) and 221–267 (PTAS…STTL). 3 stretches are compositionally biased toward low complexity: residues 125 to 143 (QQQQ…QQQQ), 223 to 242 (ASFV…TTPP), and 249 to 262 (QQQQ…QQQQ). 2 consecutive C2H2-type zinc fingers follow at residues 312 to 336 (YICD…RVVH) and 342 to 365 (FNCD…KKKH).

The protein resides in the nucleus. May be a transcription factor for genes having (A+T) stretches in their promoter and/or enhancer regions. Binds to AT rich DNA. This chain is AT-rich binding protein, found in Drosophila willistoni (Fruit fly).